We begin with the raw amino-acid sequence, 487 residues long: 1-hydroxycarotenoid 3,4-desaturase (487 aa).

Residues G12, E31, K39, 55–56, V247, N275, L431, G461, and 468–469 each bind FAD; these read SL and GI.

Belongs to the carotenoid/retinoid oxidoreductase family. Monomer.

The enzyme catalyses rhodopin + A = (3E)-3,4-didehydrorhodopin + AH2. The catalysed reaction is 1'-hydroxy-gamma-carotene + A = 1'-hydroxytorulene + AH2. It catalyses the reaction 1-hydroxy-all-trans-1,2-dihydro-neurosporene + A = demethylspheroidene + AH2. It carries out the reaction 1,1'-dihydroxy-1,1',2,2'-tetrahydroneurosporene + A = 1'-hydroxy-demethylspheroidene + AH2. The enzyme catalyses 1,1'-dihydroxy-1,1',2,2'-tetrahydrolycopene + A = 1,1'-dihydroxy-3,4-didehydro-1,2-dihydrolycopene + AH2. The protein operates within carotenoid biosynthesis. In terms of biological role, catalyzes the introduction of a C-3,4 double bond into 1'-hydroxy-gamma-carotene and rhodopin (1-hydroxylycopene) to yield 1'-hydroxytorulene and (3E)-3,4-didehydrorhodopin, respectively. Can also use 1-hydroxy-all-trans-1,2-dihydro-neurosporene, 1,1'-dihydroxy-1,1',2,2'-tetrahydroneurosporene and 1,1'-dihydroxy-1,1',2,2'-tetrahydrolycopene. Probably involved in the synthesis of myxol, a gamma-carotene derivative. May use FAD as a proton acceptor. This Nonlabens dokdonensis (strain DSM 17205 / KCTC 12402 / DSW-6) (Donghaeana dokdonensis) protein is 1-hydroxycarotenoid 3,4-desaturase.